Here is a 209-residue protein sequence, read N- to C-terminus: Ribosomal RNA large subunit methyltransferase E (209 aa).

The S-adenosyl-L-methionine site is built by glycine 63, tryptophan 65, aspartate 83, aspartate 99, and aspartate 124. Residue lysine 164 is the Proton acceptor of the active site.

This sequence belongs to the class I-like SAM-binding methyltransferase superfamily. RNA methyltransferase RlmE family.

The protein localises to the cytoplasm. It catalyses the reaction uridine(2552) in 23S rRNA + S-adenosyl-L-methionine = 2'-O-methyluridine(2552) in 23S rRNA + S-adenosyl-L-homocysteine + H(+). Functionally, specifically methylates the uridine in position 2552 of 23S rRNA at the 2'-O position of the ribose in the fully assembled 50S ribosomal subunit. The polypeptide is Ribosomal RNA large subunit methyltransferase E (Shewanella sp. (strain MR-7)).